A 711-amino-acid chain; its full sequence is Cyclomaltodextrin glucanotransferase (711 aa).

The N-terminal stretch at 1–31 (MRRWLSLVLSMSFVFSAIFIVSDTQKVTVEA) is a signal peptide. Positions 32 to 165 (AGNLNKVNFT…GIKVIIDFAP (134 aa)) are A1. Ca(2+) contacts are provided by Asp-55, Asn-57, Asn-60, and Asn-61. A disulfide bond links Cys-71 and Cys-78. Residues Gly-79 and Asp-81 each contribute to the Ca(2+) site. 127-128 (YW) contacts substrate. Asn-166 contacts Ca(2+). A b region spans residues 166–229 (NHTSPASETN…NLFDLADLNH (64 aa)). His-167 lines the substrate pocket. Ile-217 is a Ca(2+) binding site. A substrate-binding site is contributed by 220 to 223 (NLFD). Position 226 (Asp-226) interacts with Ca(2+). Positions 230–433 (QNPVIDRYLK…LRRNNPALAY (204 aa)) are A2. Residue Arg-254 coordinates substrate. Asp-256 acts as the Nucleophile in catalysis. 259 to 260 (KH) is a binding site for substrate. Ca(2+) is bound at residue His-260. Glu-284 acts as the Proton donor in catalysis. His-354, Asp-398, and Arg-402 together coordinate substrate. A c region spans residues 434 to 522 (GDTEQRWING…EVGVWAYSAT (89 aa)). The segment at 523–606 (ESTPIIGHVG…SAAYDNFEVL (84 aa)) is d. One can recognise an IPT/TIG domain in the interval 526–604 (PIIGHVGPMM…QTSAAYDNFE (79 aa)). Residues 605–711 (VLTNDQVSVR…TGKIIVDWQN (107 aa)) enclose the CBM20 domain. The interval 607 to 711 (TNDQVSVRFV…TGKIIVDWQN (105 aa)) is e.

Belongs to the glycosyl hydrolase 13 family. In terms of assembly, monomer. Requires Ca(2+) as cofactor.

It localises to the secreted. The enzyme catalyses Cyclizes part of a (1-&gt;4)-alpha-D-glucan chain by formation of a (1-&gt;4)-alpha-D-glucosidic bond.. The protein is Cyclomaltodextrin glucanotransferase (cgt) of Geobacillus stearothermophilus (Bacillus stearothermophilus).